A 250-amino-acid polypeptide reads, in one-letter code: Uracil-DNA glycosylase (250 aa).

Catalysis depends on Asp78, which acts as the Proton acceptor.

This sequence belongs to the uracil-DNA glycosylase (UDG) superfamily. UNG family.

It localises to the cytoplasm. It catalyses the reaction Hydrolyzes single-stranded DNA or mismatched double-stranded DNA and polynucleotides, releasing free uracil.. In terms of biological role, excises uracil residues from the DNA which can arise as a result of misincorporation of dUMP residues by DNA polymerase or due to deamination of cytosine. The sequence is that of Uracil-DNA glycosylase from Albidiferax ferrireducens (strain ATCC BAA-621 / DSM 15236 / T118) (Rhodoferax ferrireducens).